The chain runs to 354 residues: Ribosomal RNA large subunit methyltransferase M (354 aa).

Residues Ser-183, 216 to 219 (SPGG), Asp-235, Asp-255, and Asp-271 each bind S-adenosyl-L-methionine. Residue Lys-300 is the Proton acceptor of the active site.

It belongs to the class I-like SAM-binding methyltransferase superfamily. RNA methyltransferase RlmE family. RlmM subfamily. Monomer.

It localises to the cytoplasm. It catalyses the reaction cytidine(2498) in 23S rRNA + S-adenosyl-L-methionine = 2'-O-methylcytidine(2498) in 23S rRNA + S-adenosyl-L-homocysteine + H(+). Catalyzes the 2'-O-methylation at nucleotide C2498 in 23S rRNA. The polypeptide is Ribosomal RNA large subunit methyltransferase M (Pseudomonas putida (strain ATCC 47054 / DSM 6125 / CFBP 8728 / NCIMB 11950 / KT2440)).